The sequence spans 333 residues: Phosphate acyltransferase (333 aa).

It belongs to the PlsX family. Homodimer. Probably interacts with PlsY.

The protein localises to the cytoplasm. The enzyme catalyses a fatty acyl-[ACP] + phosphate = an acyl phosphate + holo-[ACP]. The protein operates within lipid metabolism; phospholipid metabolism. Functionally, catalyzes the reversible formation of acyl-phosphate (acyl-PO(4)) from acyl-[acyl-carrier-protein] (acyl-ACP). This enzyme utilizes acyl-ACP as fatty acyl donor, but not acyl-CoA. This chain is Phosphate acyltransferase, found in Lactobacillus johnsonii (strain CNCM I-12250 / La1 / NCC 533).